Consider the following 376-residue polypeptide: MGHFHLSNFIALIGILLVGPTATSGAAVSVVSQADSNDICSKYVVQAGETCSAIAQAHSITTADIETYNAQSWAWTGCGQISQGDFICLSSGESPMPVALPHAVCGPQVPGTARPNTWSKLGSLNPCPANQCCSSSGLCGTTPDFCTSAAHVPVALSMSTDTQPNQLTTTSQAITISTSPAIPLQKVVTSSETSSSMTTSTSATTSVPTTTSTTTTTKTTSTLKTTTTSTISSQTKTKTSTSTSTTKPKIVKPWSLTMYTKQDCKGDYYVLQGHNKGYSDTCLNLHGGLSSKDTDTGVSCKWFTNDGKSSTKCDSGALTRPQSWIVETGICTVFSVKDCKHDLHSNAYTPVPKHPCQNRGKFDTPYFVSMNCYTEG.

The N-terminal stretch at 1 to 25 (MGHFHLSNFIALIGILLVGPTATSG) is a signal peptide. The LysM domain occupies 41–89 (SKYVVQAGETCSAIAQAHSITTADIETYNAQSWAWTGCGQISQGDFICL). The tract at residues 190 to 219 (SSETSSSMTTSTSATTSVPTTTSTTTTTKT) is disordered.

This sequence belongs to the secreted LysM effector family.

The protein localises to the secreted. In terms of biological role, secreted LysM effector that might have a role in sequestration of chitin oligosaccharides (breakdown products of fungal cell walls that are released during invasion and act as triggers of host immunity) to dampen host defense. In Penicillium expansum (Blue mold rot fungus), this protein is Secreted LysM effector LysM9.